The primary structure comprises 262 residues: Acyl-[acyl-carrier-protein]--UDP-N-acetylglucosamine O-acyltransferase (262 aa).

This sequence belongs to the transferase hexapeptide repeat family. LpxA subfamily. As to quaternary structure, homotrimer.

It is found in the cytoplasm. It catalyses the reaction a (3R)-hydroxyacyl-[ACP] + UDP-N-acetyl-alpha-D-glucosamine = a UDP-3-O-[(3R)-3-hydroxyacyl]-N-acetyl-alpha-D-glucosamine + holo-[ACP]. The protein operates within glycolipid biosynthesis; lipid IV(A) biosynthesis; lipid IV(A) from (3R)-3-hydroxytetradecanoyl-[acyl-carrier-protein] and UDP-N-acetyl-alpha-D-glucosamine: step 1/6. Functionally, involved in the biosynthesis of lipid A, a phosphorylated glycolipid that anchors the lipopolysaccharide to the outer membrane of the cell. The chain is Acyl-[acyl-carrier-protein]--UDP-N-acetylglucosamine O-acyltransferase from Shigella dysenteriae serotype 1 (strain Sd197).